The sequence spans 146 residues: 3-hydroxyacyl-[acyl-carrier-protein] dehydratase FabZ (146 aa).

The active site involves H48.

This sequence belongs to the thioester dehydratase family. FabZ subfamily.

It is found in the cytoplasm. The enzyme catalyses a (3R)-hydroxyacyl-[ACP] = a (2E)-enoyl-[ACP] + H2O. In terms of biological role, involved in unsaturated fatty acids biosynthesis. Catalyzes the dehydration of short chain beta-hydroxyacyl-ACPs and long chain saturated and unsaturated beta-hydroxyacyl-ACPs. This Paracidovorax citrulli (strain AAC00-1) (Acidovorax citrulli) protein is 3-hydroxyacyl-[acyl-carrier-protein] dehydratase FabZ.